We begin with the raw amino-acid sequence, 196 residues long: Large ribosomal subunit protein eL15 (196 aa).

Positions 154–196 (PGHRGRSERGLTSAGVKGRGMRRRGKGTEKCRPSVRANANRAK) are disordered.

The protein belongs to the eukaryotic ribosomal protein eL15 family.

This is Large ribosomal subunit protein eL15 from Methanospirillum hungatei JF-1 (strain ATCC 27890 / DSM 864 / NBRC 100397 / JF-1).